A 125-amino-acid polypeptide reads, in one-letter code: Snaclec B7 (125 aa).

3 cysteine pairs are disulfide-bonded: C2–C13, C30–C119, and C96–C111. The C-type lectin domain occupies 9-120 (HEGHCYKVFK…CNISQYFVCQ (112 aa)). A glycan (N-linked (GlcNAc...) asparagine) is linked at N112.

This sequence belongs to the snaclec family. Heterodimer; disulfide-linked. As to expression, expressed by the venom gland.

The protein resides in the secreted. Interferes with one step of hemostasis (modulation of platelet aggregation, or coagulation cascade, for example). This chain is Snaclec B7, found in Macrovipera lebetinus (Levantine viper).